A 210-amino-acid chain; its full sequence is Redox-sensing transcriptional repressor Rex (210 aa).

The H-T-H motif DNA-binding region spans Val-16 to Phe-55. An NAD(+)-binding site is contributed by Gly-90–Gly-95.

Belongs to the transcriptional regulatory Rex family. As to quaternary structure, homodimer.

The protein resides in the cytoplasm. In terms of biological role, modulates transcription in response to changes in cellular NADH/NAD(+) redox state. This is Redox-sensing transcriptional repressor Rex from Desulfitobacterium hafniense (strain DSM 10664 / DCB-2).